A 719-amino-acid chain; its full sequence is Phosphoribosylformylglycinamidine synthase subunit PurL (719 aa).

His-45 is an active-site residue. Residues Tyr-48 and Lys-87 each coordinate ATP. Glu-89 contributes to the Mg(2+) binding site. Residues 90–93 and Arg-112 each bind substrate; that span reads SHNH. His-91 functions as the Proton acceptor in the catalytic mechanism. Residue Asp-113 participates in Mg(2+) binding. A substrate-binding site is contributed by Gln-236. Asp-264 contributes to the Mg(2+) binding site. 308–310 serves as a coordination point for substrate; it reads ESQ. Positions 493 and 530 each coordinate ATP. Position 531 (Asn-531) interacts with Mg(2+). Ser-533 lines the substrate pocket.

This sequence belongs to the FGAMS family. In terms of assembly, monomer. Part of the FGAM synthase complex composed of 1 PurL, 1 PurQ and 2 PurS subunits.

It localises to the cytoplasm. It carries out the reaction N(2)-formyl-N(1)-(5-phospho-beta-D-ribosyl)glycinamide + L-glutamine + ATP + H2O = 2-formamido-N(1)-(5-O-phospho-beta-D-ribosyl)acetamidine + L-glutamate + ADP + phosphate + H(+). Its pathway is purine metabolism; IMP biosynthesis via de novo pathway; 5-amino-1-(5-phospho-D-ribosyl)imidazole from N(2)-formyl-N(1)-(5-phospho-D-ribosyl)glycinamide: step 1/2. Functionally, part of the phosphoribosylformylglycinamidine synthase complex involved in the purines biosynthetic pathway. Catalyzes the ATP-dependent conversion of formylglycinamide ribonucleotide (FGAR) and glutamine to yield formylglycinamidine ribonucleotide (FGAM) and glutamate. The FGAM synthase complex is composed of three subunits. PurQ produces an ammonia molecule by converting glutamine to glutamate. PurL transfers the ammonia molecule to FGAR to form FGAM in an ATP-dependent manner. PurS interacts with PurQ and PurL and is thought to assist in the transfer of the ammonia molecule from PurQ to PurL. The polypeptide is Phosphoribosylformylglycinamidine synthase subunit PurL (Novosphingobium aromaticivorans (strain ATCC 700278 / DSM 12444 / CCUG 56034 / CIP 105152 / NBRC 16084 / F199)).